The primary structure comprises 192 residues: Pyridoxal 5'-phosphate synthase subunit PdxT (192 aa).

Position 46 to 48 (46 to 48 (GES)) interacts with L-glutamine. Cys77 acts as the Nucleophile in catalysis. Residues Arg103 and 131-132 (IR) each bind L-glutamine. Active-site charge relay system residues include His167 and Glu169.

It belongs to the glutaminase PdxT/SNO family. As to quaternary structure, in the presence of PdxS, forms a dodecamer of heterodimers. Only shows activity in the heterodimer.

It carries out the reaction aldehydo-D-ribose 5-phosphate + D-glyceraldehyde 3-phosphate + L-glutamine = pyridoxal 5'-phosphate + L-glutamate + phosphate + 3 H2O + H(+). The enzyme catalyses L-glutamine + H2O = L-glutamate + NH4(+). It participates in cofactor biosynthesis; pyridoxal 5'-phosphate biosynthesis. In terms of biological role, catalyzes the hydrolysis of glutamine to glutamate and ammonia as part of the biosynthesis of pyridoxal 5'-phosphate. The resulting ammonia molecule is channeled to the active site of PdxS. This chain is Pyridoxal 5'-phosphate synthase subunit PdxT, found in Exiguobacterium sibiricum (strain DSM 17290 / CCUG 55495 / CIP 109462 / JCM 13490 / 255-15).